Consider the following 334-residue polypeptide: Galactinol synthase 3 (334 aa).

Residue Lys97 is part of the active site. 3 residues coordinate Mn(2+): Asp113, Asp115, and His251.

It belongs to the glycosyltransferase 8 family. Galactosyltransferase subfamily. A divalent metal cation serves as cofactor.

Its subcellular location is the cytoplasm. The enzyme catalyses myo-inositol + UDP-alpha-D-galactose = alpha-D-galactosyl-(1-&gt;3)-1D-myo-inositol + UDP + H(+). Its function is as follows. Galactinol synthase involved in the biosynthesis of raffinose family oligosaccharides (RFOs) that function as osmoprotectants. May promote plant stress tolerance. This Arabidopsis thaliana (Mouse-ear cress) protein is Galactinol synthase 3 (GOLS3).